Here is a 710-residue protein sequence, read N- to C-terminus: ARM REPEAT PROTEIN INTERACTING WITH ABF2 (710 aa).

The interval 1–35 (MDQQPERREGRSFPERKGQKRKLEEGAAAVEDREI) is disordered. ARM repeat units follow at residues 85 to 127 (EDLV…EKGS), 138 to 185 (PEYQ…NLAH), 188 to 227 (SSIKTRVRVEGGIPPLVELLEFSDSKVQRAAAGALRTLAF), 230 to 269 (DDNKNQIVECNALPTLILMLGSEDAAIHYEAVGVIGNLVH), 272 to 311 (PHIKKEVLTAGALQPVIGLLSSCCPESQREAALLLGQFAS), 314 to 353 (SDCKVHIVQRGAVRPLIEMLQSPDVQLKEMSAFALGRLAQ), 355 to 394 (AHNQAGIAHSGGLGPLLKLLDSRNGSLQHNAAFALYGLAD), 429 to 468 (LKRLEEKIHGRVLRHLLYLMRISEKSIQRRVALALAHLCS), and 470 to 509 (EDQRTIFIDDNGLELLLGLLGSLNTKQQLDGAAALYKLAN). The region spanning 541 to 608 (SDVTFLVEGR…IYTGSVDITN (68 aa)) is the BTB domain.

Interacts with ABF2. Interacts with DUF7/AIP1. Detected in embryos and most of the vegetative and reproductive organs.

The protein localises to the nucleus. The protein operates within protein modification; protein ubiquitination. In terms of biological role, may act as a substrate-specific adapter of an E3 ubiquitin-protein ligase complex (CUL3-RBX1-BTB) which mediates the ubiquitination and subsequent proteasomal degradation of target proteins. Acts as a positive regulator of ABA response via the modulation of the transcriptional activity of ABF2, a transcription factor which controls ABA-dependent gene expression via the G-box-type ABA-responsive elements. Negative regulator of seed germination and young seedling growth. This Arabidopsis thaliana (Mouse-ear cress) protein is ARM REPEAT PROTEIN INTERACTING WITH ABF2 (ARIA).